The sequence spans 295 residues: Structure-specific endonuclease subunit SLX1 (295 aa).

One can recognise a GIY-YIG domain in the interval 11-93 (EFYGVYILQS…QHPKTSRHMA (83 aa)). The segment at 85-133 (HPKTSRHMAGGGGSVTATAETAKSAPVAGKSDATSPAKNRRNAAPVARS) is disordered. Residues 205 to 272 (CCLCSDAIDY…IPSDVSCSQC (68 aa)) form an SLX1-type zinc finger.

It belongs to the SLX1 family. As to quaternary structure, forms a heterodimer with SLX4. It depends on a divalent metal cation as a cofactor.

It localises to the nucleus. Functionally, catalytic subunit of the SLX1-SLX4 structure-specific endonuclease that resolves DNA secondary structures generated during DNA repair and recombination. Has endonuclease activity towards branched DNA substrates, introducing single-strand cuts in duplex DNA close to junctions with ss-DNA. This chain is Structure-specific endonuclease subunit SLX1, found in Meyerozyma guilliermondii (strain ATCC 6260 / CBS 566 / DSM 6381 / JCM 1539 / NBRC 10279 / NRRL Y-324) (Yeast).